Reading from the N-terminus, the 432-residue chain is Putative D-alanyl-D-alanine carboxypeptidase (432 aa).

The chain crosses the membrane as a helical; Signal-anchor span at residues 7–25 (ATVLLTFSLSAFAVEYPVL).

Belongs to the peptidase S12 family. YfeW subfamily.

It localises to the cell inner membrane. It catalyses the reaction Preferential cleavage: (Ac)2-L-Lys-D-Ala-|-D-Ala. Also transpeptidation of peptidyl-alanyl moieties that are N-acyl substituents of D-alanine.. This Salmonella heidelberg (strain SL476) protein is Putative D-alanyl-D-alanine carboxypeptidase.